A 392-amino-acid polypeptide reads, in one-letter code: Succinyl-diaminopimelate desuccinylase (392 aa).

Histidine 71 provides a ligand contact to Zn(2+). Residue aspartate 73 is part of the active site. Aspartate 102 contributes to the Zn(2+) binding site. Glutamate 144 (proton acceptor) is an active-site residue. Positions 145, 173, and 362 each coordinate Zn(2+).

It belongs to the peptidase M20A family. DapE subfamily. Homodimer. It depends on Zn(2+) as a cofactor. Requires Co(2+) as cofactor.

It carries out the reaction N-succinyl-(2S,6S)-2,6-diaminopimelate + H2O = (2S,6S)-2,6-diaminopimelate + succinate. Its pathway is amino-acid biosynthesis; L-lysine biosynthesis via DAP pathway; LL-2,6-diaminopimelate from (S)-tetrahydrodipicolinate (succinylase route): step 3/3. Catalyzes the hydrolysis of N-succinyl-L,L-diaminopimelic acid (SDAP), forming succinate and LL-2,6-diaminopimelate (DAP), an intermediate involved in the bacterial biosynthesis of lysine and meso-diaminopimelic acid, an essential component of bacterial cell walls. The polypeptide is Succinyl-diaminopimelate desuccinylase (Rhodospirillum rubrum (strain ATCC 11170 / ATH 1.1.1 / DSM 467 / LMG 4362 / NCIMB 8255 / S1)).